The chain runs to 244 residues: Ribonuclease P protein component 3 (244 aa).

The protein belongs to the eukaryotic/archaeal RNase P protein component 3 family. As to quaternary structure, consists of a catalytic RNA component and at least 4-5 protein subunits.

It is found in the cytoplasm. The catalysed reaction is Endonucleolytic cleavage of RNA, removing 5'-extranucleotides from tRNA precursor.. Its function is as follows. Part of ribonuclease P, a protein complex that generates mature tRNA molecules by cleaving their 5'-ends. This Methanopyrus kandleri (strain AV19 / DSM 6324 / JCM 9639 / NBRC 100938) protein is Ribonuclease P protein component 3.